Here is a 119-residue protein sequence, read N- to C-terminus: MSRSSDNDQYRSRNALIRRHIEKMDASLHVGTKEFDISKVSEVDSVDDLLIDNAARYLLKDWKGVGELVNGVEVALEYTAERGIALLKQNPELYWQILAEAASIAQGKEQQKQDTIKKP.

The chain is Protein YdaY (ydaY) from Escherichia coli (strain K12).